The following is a 567-amino-acid chain: MSRISGDGGSRVSIPADLLQTIQNIREVTGKQHSDEDIFSVFKECFSDPHETTQKLLYLDTFHEVRSKRERKKENLVPNTQGRGRTGRKNFASSYTDASNGRSAAFKKQSGANHIIGGSGTASSAPNNARNDTKPSSIMAPNPISLPSGISNQKIQDAIISPVDKVDTEEQPLSKATSSSKDVVEPDKSKESSVSVAVSDSVVENDTQYAVVETFQIPQQSERVIKSEVAASKCKNESLLKSDVGERPHVTFPVHIQVAKMLENGLTFGSFDSNFVREASSDKFTIGCDDSNIESSHGTAASARKDISTFSQDKNHEISNSAAQNELTLQPDQTVLPEEGSEGDKVKNEVLPITDTHQAAKCDAPPISYPDQYSLAAAQQAMHLYRQQYSLNYFPYGPYFPPYYMPQPYIHQYLSPNGFQQQSYLPPGDDAPAPPGAELPLTHIKPGSDIGNSPPTTIPFSYTSYAFNHIPSAATINATHKEEKKENMYTTGPLSLANLQASPMYNLSLQGQPIAFPTMQAGIRGLYQQTQPILAPLSISARTEPIGPSHVTNQQPQAARTNLGNNY.

3 disordered regions span residues 70 to 150 (ERKK…PSGI), 164 to 192 (DKVD…SKES), and 545 to 567 (PIGP…GNNY). Polar residues-rich tracts occupy residues 91-102 (FASSYTDASNGR) and 121-136 (TASS…TKPS). The segment covering 182–191 (DVVEPDKSKE) has biased composition (basic and acidic residues). The span at 550–567 (HVTNQQPQAARTNLGNNY) shows a compositional bias: polar residues.

Belongs to the GIP1 family. Monomer, homodimer, homooligomer. Under non-reducing conditions, predominantly present in high molecular weight forms, but predominates in low molecular weight monomers under reducing conditions. Interacts with BZIP16, BZIP68 and GBF1. Interacts with LBD18. Expressed in roots, leaves, stems and flowers.

It localises to the nucleus. In terms of biological role, plant specific protein that enhances G-box-binding factor (GBF) DNA binding activity. May function as a nuclear chaperone or lever and regulate the multimeric state of GBFs. May contribute to bZIP-mediated gene regulation. Is able to refold denatured rhodanese in vitro. Reduces DNA-binding activity of BZIP16, BZIP68 and GBF1 under non-reducing conditions through direct physical interaction. Acts as a negative co-regulator in red and blue light-mediated hypocotyl elongation. Functions to promote hypocotyl elongation during the early stages of seedling development by regulating the repression effect by BZIP16 and the activation effect by BZIP68 and GBF1 on LHCB2.4 expression. Enhances transcriptional activity of LBD18 in the EXP14 promoter. May act as a transcriptional coactivator of LBD18. In Arabidopsis thaliana (Mouse-ear cress), this protein is GBF-interacting protein 1.